The primary structure comprises 135 residues: ATP synthase epsilon chain (135 aa).

This sequence belongs to the ATPase epsilon chain family. F-type ATPases have 2 components, CF(1) - the catalytic core - and CF(0) - the membrane proton channel. CF(1) has five subunits: alpha(3), beta(3), gamma(1), delta(1), epsilon(1). CF(0) has three main subunits: a, b and c.

It is found in the cell inner membrane. In terms of biological role, produces ATP from ADP in the presence of a proton gradient across the membrane. The chain is ATP synthase epsilon chain from Allorhizobium ampelinum (strain ATCC BAA-846 / DSM 112012 / S4) (Agrobacterium vitis (strain S4)).